Consider the following 352-residue polypeptide: MSRGTMPQPGAWPGASCAETPAREAGAAARDGGKVTAGAQPRAATRCPAEHEEDMYRAADEIEKEKELLIHERGISEPRLSVAPEMDIMDYCKKEWRGNTQKATCMKKGYEEVSQKFTSIRRVRGDNYCALRATLFQAMSQLAELPPWLQDLELILLPEKLINKYTWIKQWKLGLKFDGKSEDLVEKIKESLALLRKKWVSLAAMKTAEARQTACDELFTNEEEEYSLYEAVKFLMLNRAIELYDDKEKGKEVPFFSVLLFARDTSNDPEQLLRNHLNQVGHTGGLEQVEMFLLAYAVRHSIRVYRLSKYNTEEFITVYPTDPPKDWPMVTLIAEDDRHYNIPVRVCEETSV.

Residues 1–49 (MSRGTMPQPGAWPGASCAETPAREAGAAARDGGKVTAGAQPRAATRCPA) form a disordered region. The span at 18–30 (AETPAREAGAAAR) shows a compositional bias: low complexity. Residues 49–73 (AEHEEDMYRAADEIEKEKELLIHER) adopt a coiled-coil conformation. The PIM motif signature appears at 52-57 (EEDMYR). Tyrosine 56 carries the phosphotyrosine modification. Linear diubiquitin binding regions lie at residues 95–96 (EW) and 124–126 (RGD). Residues 118 to 346 (TSIRRVRGDN…DRHYNIPVRV (229 aa)) enclose the OTU domain. The active site involves aspartate 126. Residue cysteine 129 is the Nucleophile of the active site. Linear diubiquitin binding stretches follow at residues 255-259 (FFSVL), 283-289 (TGGLEQV), and 336-338 (DDR). Histidine 339 is an active-site residue. A PDZ-binding motif is present at residues 349 to 352 (ETSV).

It belongs to the peptidase C65 family. Otulin subfamily. Interacts (via the PUB domain) with RNF31 (via the PIM motif); the interaction is direct. Interacts with DVL2. In terms of processing, ubiquitinated. Acetylated. Post-translationally, phosphorylated. Phosphorylation at Tyr-56 prevents interaction with RNF31; dephosphorylation promotes interaction with RNF31 and the LUBAC complex.

The protein resides in the cytoplasm. It carries out the reaction Thiol-dependent hydrolysis of ester, thioester, amide, peptide and isopeptide bonds formed by the C-terminal Gly of ubiquitin (a 76-residue protein attached to proteins as an intracellular targeting signal).. Functionally, deubiquitinase that specifically removes linear ('Met-1'-linked) polyubiquitin chains to substrates and acts as a regulator of angiogenesis and innate immune response. Required during angiogenesis, craniofacial and neuronal development by regulating the canonical Wnt signaling together with the LUBAC complex. Acts as a negative regulator of NF-kappa-B by regulating the activity of the LUBAC complex. OTULIN function is mainly restricted to homeostasis of the LUBAC complex: acts by removing 'Met-1'-linked autoubiquitination of the LUBAC complex, thereby preventing inactivation of the LUBAC complex. Acts as a key negative regulator of inflammation by restricting spontaneous inflammation and maintaining immune homeostasis. In myeloid cell, required to prevent unwarranted secretion of cytokines leading to inflammation and autoimmunity by restricting linear polyubiquitin formation. Plays a role in innate immune response by restricting linear polyubiquitin formation on LUBAC complex in response to NOD2 stimulation, probably to limit NOD2-dependent pro-inflammatory signaling. This is Ubiquitin thioesterase otulin from Mus musculus (Mouse).